The sequence spans 861 residues: Nuclear cap-binding protein complex subunit 1 (861 aa).

The short motif at 22–30 (RMPKRQRIP) is the Nuclear localization signal element. Positions 36–264 (CKEMMPDIRT…LVRVVLPNVK (229 aa)) constitute an MIF4G domain.

Belongs to the NCBP1 family. As to quaternary structure, component of the nuclear cap-binding complex (CBC), a heterodimer composed of STO1/CBC1 and CBC2 that interacts with capped RNAs. The complex interacts strongly with the importin subunit alpha SRP1. The SRP1-CBC trimer also binds to capped RNAs, but formation of the importin alpha/beta heterodimer upon binding of KAP95 to SRP1 in the cytoplasm causes dissociation of CBC from the RNA. The CBC complex is part of the commitment complex 1 (CC1), binding to the cap of pre-mRNA and interacting with U1 snRNP subunits MUD2 and SNU56. The CBC complex is part of the NRD1 complex, composed of CBC2, NAB1, NRD1, SEN1 and STO1/CBC2. The CBC complex also interacts with NPL3 and eIF4G (TIF4631 and TIF4632).

The protein resides in the nucleus. It localises to the cytoplasm. Its subcellular location is the perinuclear region. In terms of biological role, component of the CBC complex, which binds co-transcriptionally to the 5'-cap of pre-mRNAs and is involved in maturation, export and degradation of nuclear mRNAs. The CBC complex is required for efficient pre-mRNA splicing through efficient commitment complex and spliceosome formation. Together with NPL3, the CBC complex is required for export of mRNAs out of the nucleus. The CBC complex is also involved in nuclear mRNA degradation, probably by directing the mRNAs to the sites of degradation. Affects replication of the positive-strand RNA virus BMV. This chain is Nuclear cap-binding protein complex subunit 1 (STO1), found in Saccharomyces cerevisiae (strain ATCC 204508 / S288c) (Baker's yeast).